The chain runs to 396 residues: Diels-Alderase mpsD (396 aa).

The protein belongs to the Diels-Alderase family.

It participates in secondary metabolite biosynthesis. Diels-Alderase; part of the gene cluster that mediates the biosynthesis of macrophasetins, 3-decalinoyltetramic acids (DTAs) which feature a tetramate (pyrrolidine-2,4-dione) unit connected to a decalin fragment and that have potent bioactivities. The PKS-NRPS mpsA together with its associated enoylreductase partner mpsG incorporate one unit of acetyl-CoA, seven units of malonyl-CoA, and one unit of L-alanine to assemble the linear tetramic acid intermediate corresponding to the backbone of macrophasetins. Without the Diels-Alderase mpsD, the mpsA/G product can undergo the non-enzymatic intramolecular Diels-Alder (IMDA) reaction to generate both macrophasetin A and macrophasetin B. Catalyzed by mpsD, the linear tetramic acid intermediate is thoroughly converted to macrophasetin A via the endo-IMDA reaction in a regioselective and stereoselective manner. Finally, the cytochrome P450 monooxygenase mpsF catalyzes the hydroxylation at C20 to yield the end product macrophasetin C. The chain is Diels-Alderase mpsD from Macrophomina phaseolina (strain MS6) (Charcoal rot fungus).